An 82-amino-acid polypeptide reads, in one-letter code: UPF0153 protein VC_1057 (82 aa).

The protein belongs to the UPF0153 family.

This Vibrio cholerae serotype O1 (strain ATCC 39315 / El Tor Inaba N16961) protein is UPF0153 protein VC_1057.